A 186-amino-acid polypeptide reads, in one-letter code: ATP synthase subunit delta (186 aa).

Belongs to the ATPase delta chain family. In terms of assembly, F-type ATPases have 2 components, F(1) - the catalytic core - and F(0) - the membrane proton channel. F(1) has five subunits: alpha(3), beta(3), gamma(1), delta(1), epsilon(1). F(0) has three main subunits: a(1), b(2) and c(10-14). The alpha and beta chains form an alternating ring which encloses part of the gamma chain. F(1) is attached to F(0) by a central stalk formed by the gamma and epsilon chains, while a peripheral stalk is formed by the delta and b chains.

The protein localises to the cell membrane. Its function is as follows. F(1)F(0) ATP synthase produces ATP from ADP in the presence of a proton or sodium gradient. F-type ATPases consist of two structural domains, F(1) containing the extramembraneous catalytic core and F(0) containing the membrane proton channel, linked together by a central stalk and a peripheral stalk. During catalysis, ATP synthesis in the catalytic domain of F(1) is coupled via a rotary mechanism of the central stalk subunits to proton translocation. In terms of biological role, this protein is part of the stalk that links CF(0) to CF(1). It either transmits conformational changes from CF(0) to CF(1) or is implicated in proton conduction. In Mycoplasmopsis agalactiae (strain NCTC 10123 / CIP 59.7 / PG2) (Mycoplasma agalactiae), this protein is ATP synthase subunit delta.